The sequence spans 183 residues: TATA-box-binding protein 1 (183 aa).

2 consecutive repeat copies span residues 8–84 and 99–177.

Belongs to the TBP family.

Functionally, general factor that plays a role in the activation of archaeal genes transcribed by RNA polymerase. Binds specifically to the TATA box promoter element which lies close to the position of transcription initiation. The polypeptide is TATA-box-binding protein 1 (Methanosarcina acetivorans (strain ATCC 35395 / DSM 2834 / JCM 12185 / C2A)).